A 309-amino-acid chain; its full sequence is Non-homologous end-joining factor 1 (309 aa).

The tract at residues 1-134 (MEAVLSALPW…TPVAVVCRQL (134 aa)) is globular head. Residues 223-298 (GKTGRKRKHS…AGSEDRSTSR (76 aa)) are C-terminal tail. The tract at residues 223 to 309 (GKTGRKRKHS…KKKKAVGLFR (87 aa)) is disordered. Over residues 243–252 (HITDHQHISE) the composition is skewed to basic and acidic residues. Composition is skewed to polar residues over residues 253–265 (STDV…SQEH) and 273–290 (RSQV…STAG). Over residues 297 to 309 (SRAKKKKAVGLFR) the composition is skewed to basic residues. Positions 299–309 (AKKKKAVGLFR) match the XLM motif.

Belongs to the XRCC4-XLF family. XLF subfamily. As to quaternary structure, homodimer. Interacts with xrcc4; the interaction is direct and is mediated via a head-to-head interaction between N-terminal head regions. Component of the core long-range non-homologous end joining (NHEJ) complex (also named DNA-PK complex) composed of prkdc/DNA-PKcs, lig4, xrcc4, xrcc6/Ku70, xrcc5/Ku80 and nhej1/xlf.

It is found in the nucleus. The protein resides in the chromosome. Functionally, DNA repair protein involved in DNA non-homologous end joining (NHEJ); it is required for double-strand break (DSB) repair and V(D)J recombination and is also involved in telomere maintenance. Plays a key role in NHEJ by promoting the ligation of various mismatched and non-cohesive ends. In some studies, has been shown to associate with xrcc4 to form alternating helical filaments that bridge DNA and act like a bandage, holding together the broken DNA until it is repaired. Alternatively, it has also been shown that rather than forming filaments, a single nhej1 dimer interacts through both head domains with xrcc4 to promote the close alignment of DNA ends. The xrcc4-nhej1/xlf subcomplex binds to the DNA fragments of a DSB in a highly diffusive manner and robustly bridges two independent DNA molecules, holding the broken DNA fragments in close proximity to one other. The mobility of the bridges ensures that the ends remain accessible for further processing by other repair factors. The polypeptide is Non-homologous end-joining factor 1 (nhej1) (Danio rerio (Zebrafish)).